Here is a 1722-residue protein sequence, read N- to C-terminus: Leucine-rich repeat- and IQ domain-containing protein 1 (1722 aa).

Disordered regions lie at residues 23–47, 182–202, 265–285, and 319–367; these read SLEK…TDSV, EDKE…QFQE, RTRF…QQNN, and QEWK…YEEK. Residues 38-47 show a composition bias toward acidic residues; that stretch reads QSDDSDTDSV. The span at 265–278 shows a compositional bias: basic and acidic residues; it reads RTRFKDQQEKEKNS. An IQ 1 domain is found at 283–312; sequence QNNAAVKIQAKYKAFVAYQKYGPIIKEQIE. LRR repeat units follow at residues 819 to 840, 841 to 861, 862 to 883, 884 to 905, 970 to 991, 992 to 1013, 1014 to 1035, 1036 to 1057, 1060 to 1081, and 1082 to 1103; these read NLQF…SNCK, KLKY…ENLE, NLCV…DGCT, NIQC…FFLE, NLQQ…CDTP, TIVY…ENCG, LLQI…ENLV, LLRE…SSYW, LLQN…FHFV, and SLEK…IKWF. One can recognise an LRRCT domain in the interval 1117–1157; it reads NPLLQETNWRDSLLKVLPALRILNGNILNSNSESRTEEHNQ. IQ domains are found at residues 1335–1364 and 1395–1424; these read KIMA…LHTA and REKA…AIKN. The segment covering 1506–1524 has biased composition (polar residues); that stretch reads SEHTQFNSRSENKTSSWTP. Positions 1506–1534 are disordered; sequence SEHTQFNSRSENKTSSWTPESKTSRKSLL.

This Homo sapiens (Human) protein is Leucine-rich repeat- and IQ domain-containing protein 1 (LRRIQ1).